The primary structure comprises 84 residues: Exodeoxyribonuclease 7 small subunit (84 aa).

Residues Gln-65 to Gly-84 form a disordered region.

Belongs to the XseB family. Heterooligomer composed of large and small subunits.

It localises to the cytoplasm. The enzyme catalyses Exonucleolytic cleavage in either 5'- to 3'- or 3'- to 5'-direction to yield nucleoside 5'-phosphates.. In terms of biological role, bidirectionally degrades single-stranded DNA into large acid-insoluble oligonucleotides, which are then degraded further into small acid-soluble oligonucleotides. The sequence is that of Exodeoxyribonuclease 7 small subunit from Syntrophobacter fumaroxidans (strain DSM 10017 / MPOB).